A 140-amino-acid chain; its full sequence is Ribosomal RNA large subunit methyltransferase H (140 aa).

S-adenosyl-L-methionine contacts are provided by Leu55 and Gly87.

The protein belongs to the RNA methyltransferase RlmH family. In terms of assembly, homodimer.

It localises to the cytoplasm. It carries out the reaction pseudouridine(1915) in 23S rRNA + S-adenosyl-L-methionine = N(3)-methylpseudouridine(1915) in 23S rRNA + S-adenosyl-L-homocysteine + H(+). Specifically methylates the pseudouridine at position 1915 (m3Psi1915) in 23S rRNA. This is Ribosomal RNA large subunit methyltransferase H from Rhizorhabdus wittichii (strain DSM 6014 / CCUG 31198 / JCM 15750 / NBRC 105917 / EY 4224 / RW1) (Sphingomonas wittichii).